The sequence spans 438 residues: Serine--tRNA ligase (438 aa).

Thr-235–Glu-237 is an L-serine binding site. ATP is bound by residues Arg-266–Glu-268 and Val-282. Glu-289 is an L-serine binding site. Glu-355–Ser-358 contributes to the ATP binding site. Thr-393 lines the L-serine pocket.

This sequence belongs to the class-II aminoacyl-tRNA synthetase family. Type-1 seryl-tRNA synthetase subfamily. As to quaternary structure, homodimer. The tRNA molecule binds across the dimer.

It carries out the reaction tRNA(Ser) + L-serine + ATP = L-seryl-tRNA(Ser) + AMP + diphosphate + H(+). It catalyses the reaction tRNA(Sec) + L-serine + ATP = L-seryl-tRNA(Sec) + AMP + diphosphate + H(+). It participates in aminoacyl-tRNA biosynthesis; selenocysteinyl-tRNA(Sec) biosynthesis; L-seryl-tRNA(Sec) from L-serine and tRNA(Sec): step 1/1. Its function is as follows. Catalyzes the attachment of serine to tRNA(Ser). Is also able to aminoacylate tRNA(Sec) with serine, to form the misacylated tRNA L-seryl-tRNA(Sec), which will be further converted into selenocysteinyl-tRNA(Sec). This Helianthus annuus (Common sunflower) protein is Serine--tRNA ligase.